Here is a 381-residue protein sequence, read N- to C-terminus: Lysophosphatidylserine lipase ABHD12 (381 aa).

At 1 to 58 (MRKRNESVTVEHERAAAAPAPLDKGCSLRHSLRLPAADTGMKRPLGRRHGLWFRLRRL) the chain is on the cytoplasmic side. Residues 59–79 (IIWLLGVYIAIPFLVKLCPAI) form a helical membrane-spanning segment. The Extracellular portion of the chain corresponds to 80-381 (QAKLVFLNFV…LGIPEHEHHH (302 aa)). N-linked (GlcNAc...) asparagine glycosylation is present at Asn-106. Residue Ser-229 is the Nucleophile of the active site. Residues Asp-316 and His-355 each act as charge relay system in the active site.

The protein belongs to the serine esterase family.

It is found in the endoplasmic reticulum membrane. It catalyses the reaction 1-(9Z-octadecenoyl)-sn-glycero-3-phospho-L-serine + H2O = sn-glycero-3-phospho-L-serine + (9Z)-octadecenoate + H(+). The catalysed reaction is 1-(9Z-octadecenoyl)-sn-glycero-3-phospho-(1'-sn-glycerol) + H2O = sn-glycero-3-phospho-(1'-sn-glycerol) + (9Z)-octadecenoate + H(+). The enzyme catalyses 1-(9Z-octadecenoyl)-sn-glycero-3-phospho-(1D-myo-inositol) + H2O = sn-glycero-3-phospho-1D-myo-inositol + (9Z)-octadecenoate + H(+). It carries out the reaction 1-(9Z-octadecenoyl)-sn-glycero-3-phosphoethanolamine + H2O = sn-glycero-3-phosphoethanolamine + (9Z)-octadecenoate + H(+). It catalyses the reaction 1-(9Z-octadecenoyl)-sn-glycero-3-phosphocholine + H2O = 1-(9Z-octadecenoyl)-sn-glycerol + phosphocholine + H(+). The catalysed reaction is 2-(9Z-octadecenoyl)-glycerol + H2O = glycerol + (9Z)-octadecenoate + H(+). The enzyme catalyses 1-hexadecanoyl-sn-glycero-3-phospho-L-serine + H2O = sn-glycero-3-phospho-L-serine + hexadecanoate + H(+). It carries out the reaction 2-(5Z,8Z,11Z,14Z-eicosatetraenoyl)-glycerol + H2O = glycerol + (5Z,8Z,11Z,14Z)-eicosatetraenoate + H(+). It catalyses the reaction Hydrolyzes glycerol monoesters of long-chain fatty acids.. The catalysed reaction is 1-decanoylglycerol + H2O = decanoate + glycerol + H(+). The enzyme catalyses 1-dodecanoylglycerol + H2O = dodecanoate + glycerol + H(+). It carries out the reaction 1-tetradecanoylglycerol + H2O = tetradecanoate + glycerol + H(+). It catalyses the reaction 2-hexadecanoylglycerol + H2O = glycerol + hexadecanoate + H(+). The catalysed reaction is 1-(9Z-octadecenoyl)-glycerol + H2O = glycerol + (9Z)-octadecenoate + H(+). The enzyme catalyses 2-(9Z,12Z-octadecadienoyl)-glycerol + H2O = (9Z,12Z)-octadecadienoate + glycerol + H(+). It carries out the reaction 1-(5Z,8Z,11Z,14Z-eicosatetraenoyl)-glycerol + H2O = glycerol + (5Z,8Z,11Z,14Z)-eicosatetraenoate + H(+). It catalyses the reaction 1-(9Z,12Z-octadecadienoyl)-glycerol + H2O = (9Z,12Z)-octadecadienoate + glycerol + H(+). The catalysed reaction is 1-hexadecanoylglycerol + H2O = glycerol + hexadecanoate + H(+). The enzyme catalyses 1-octadecanoylglycerol + H2O = octadecanoate + glycerol + H(+). It carries out the reaction 1-octadecanoyl-2-(9,10-epoxyoctadecanoyl)-sn-glycero-3-phospho-L-serine + H2O = 9,10-epoxyoctadecanoate + 1-octadecanoyl-sn-glycero-3-phosphoserine + H(+). It catalyses the reaction 1-octadecanoyl-2-(10-hydroxyoctadecanoyl)-sn-glycero-3-phospho-L-serine + H2O = 1-octadecanoyl-sn-glycero-3-phosphoserine + 10-hydroxyoctadecanoate + H(+). The catalysed reaction is 1-hexadecanoyl-2-(10-hydroxyoctadecanoyl)-sn-glycero-3-phospho-L-serine + H2O = 10-hydroxyoctadecanoate + 1-hexadecanoyl-sn-glycero-3-phospho-L-serine + H(+). In terms of biological role, lysophosphatidylserine (LPS) lipase that mediates the hydrolysis of lysophosphatidylserine, a class of signaling lipids that regulates immunological and neurological processes. Represents a major lysophosphatidylserine lipase in the brain, thereby playing a key role in the central nervous system. Also able to hydrolyze oxidized phosphatidylserine; oxidized phosphatidylserine is produced in response to severe inflammatory stress and constitutes a proapoptotic 'eat me' signal. Also has monoacylglycerol (MAG) lipase activity: hydrolyzes 2-arachidonoylglycerol (2-AG), thereby acting as a regulator of endocannabinoid signaling pathways. Has a strong preference for very-long-chain lipid substrates; substrate specificity is likely due to improved catalysis and not improved substrate binding. The sequence is that of Lysophosphatidylserine lipase ABHD12 from Gallus gallus (Chicken).